Reading from the N-terminus, the 89-residue chain is Small ribosomal subunit protein uS15 (89 aa).

The protein belongs to the universal ribosomal protein uS15 family. Part of the 30S ribosomal subunit. Forms a bridge to the 50S subunit in the 70S ribosome, contacting the 23S rRNA.

Its function is as follows. One of the primary rRNA binding proteins, it binds directly to 16S rRNA where it helps nucleate assembly of the platform of the 30S subunit by binding and bridging several RNA helices of the 16S rRNA. In terms of biological role, forms an intersubunit bridge (bridge B4) with the 23S rRNA of the 50S subunit in the ribosome. In Yersinia enterocolitica serotype O:8 / biotype 1B (strain NCTC 13174 / 8081), this protein is Small ribosomal subunit protein uS15.